Here is an 86-residue protein sequence, read N- to C-terminus: MTYEQLYKEFHSSKSFQPFIHLDTQPKFAICGLIVTLAVLSSALFAVGSKSSYIKKLFFYTILSVIGSLFAGLTTVFASNSFGVYV.

At Thr-2–Lys-27 the chain is on the lumenal side. Residues Phe-28–Gly-48 form a helical membrane-spanning segment. Residues Ser-49–Lys-56 lie on the Cytoplasmic side of the membrane. Residues Leu-57 to Phe-77 traverse the membrane as a helical segment. Over Ala-78 to Val-86 the chain is Lumenal.

The protein belongs to the OST5 family. Component of the oligosaccharyltransferase (OST) complex, which appears to exist in two assemblies comprising OST1, OST2, OST4, OST5, STT3, SWP1, WPB1, and either OST3 or OST6. OST assembly occurs through the formation of 3 subcomplexes. Subcomplex 1 contains OST1 and OST5, subcomplex 2 contains STT3, OST3, and OST4, and subcomplex 3 contains OST2, WBP1, and SWP1.

Its subcellular location is the endoplasmic reticulum membrane. Its pathway is protein modification; protein glycosylation. Subunit of the oligosaccharyl transferase (OST) complex that catalyzes the initial transfer of a defined glycan (Glc(3)Man(9)GlcNAc(2) in eukaryotes) from the lipid carrier dolichol-pyrophosphate to an asparagine residue within an Asn-X-Ser/Thr consensus motif in nascent polypeptide chains, the first step in protein N-glycosylation. N-glycosylation occurs cotranslationally and the complex associates with the Sec61 complex at the channel-forming translocon complex that mediates protein translocation across the endoplasmic reticulum (ER). All subunits are required for a maximal enzyme activity. This is Dolichyl-diphosphooligosaccharide--protein glycosyltransferase subunit OST5 (OST5) from Saccharomyces cerevisiae (strain ATCC 204508 / S288c) (Baker's yeast).